The sequence spans 416 residues: Adenylosuccinate synthetase (416 aa).

GTP-binding positions include 11–17 (GDEGKGK) and 39–41 (GHT). Aspartate 12 functions as the Proton acceptor in the catalytic mechanism. Residues aspartate 12 and glycine 39 each coordinate Mg(2+). Residues 12–15 (DEGK), 37–40 (NAGH), threonine 125, arginine 139, glutamine 214, threonine 229, and arginine 290 each bind IMP. Histidine 40 (proton donor) is an active-site residue. 286–292 (TTTGRPR) contributes to the substrate binding site. GTP is bound by residues arginine 292, 318 to 320 (KLD), and 405 to 407 (SLG).

The protein belongs to the adenylosuccinate synthetase family. In terms of assembly, homodimer. Requires Mg(2+) as cofactor.

It localises to the cytoplasm. It carries out the reaction IMP + L-aspartate + GTP = N(6)-(1,2-dicarboxyethyl)-AMP + GDP + phosphate + 2 H(+). The protein operates within purine metabolism; AMP biosynthesis via de novo pathway; AMP from IMP: step 1/2. Functionally, plays an important role in the de novo pathway of purine nucleotide biosynthesis. Catalyzes the first committed step in the biosynthesis of AMP from IMP. The sequence is that of Adenylosuccinate synthetase from Picrophilus torridus (strain ATCC 700027 / DSM 9790 / JCM 10055 / NBRC 100828 / KAW 2/3).